The primary structure comprises 426 residues: Serine--tRNA ligase (426 aa).

Residue 231–233 (TSE) participates in L-serine binding. ATP is bound at residue 262 to 264 (RSE). E285 serves as a coordination point for L-serine. Residue 349-352 (EISS) coordinates ATP. Position 385 (S385) interacts with L-serine.

Belongs to the class-II aminoacyl-tRNA synthetase family. Type-1 seryl-tRNA synthetase subfamily. In terms of assembly, homodimer. The tRNA molecule binds across the dimer.

It is found in the cytoplasm. It carries out the reaction tRNA(Ser) + L-serine + ATP = L-seryl-tRNA(Ser) + AMP + diphosphate + H(+). It catalyses the reaction tRNA(Sec) + L-serine + ATP = L-seryl-tRNA(Sec) + AMP + diphosphate + H(+). It participates in aminoacyl-tRNA biosynthesis; selenocysteinyl-tRNA(Sec) biosynthesis; L-seryl-tRNA(Sec) from L-serine and tRNA(Sec): step 1/1. Functionally, catalyzes the attachment of serine to tRNA(Ser). Is also able to aminoacylate tRNA(Sec) with serine, to form the misacylated tRNA L-seryl-tRNA(Sec), which will be further converted into selenocysteinyl-tRNA(Sec). This is Serine--tRNA ligase from Legionella pneumophila (strain Lens).